A 128-amino-acid chain; its full sequence is Ribonuclease P protein component (128 aa).

This sequence belongs to the RnpA family. In terms of assembly, consists of a catalytic RNA component (M1 or rnpB) and a protein subunit.

The enzyme catalyses Endonucleolytic cleavage of RNA, removing 5'-extranucleotides from tRNA precursor.. In terms of biological role, RNaseP catalyzes the removal of the 5'-leader sequence from pre-tRNA to produce the mature 5'-terminus. It can also cleave other RNA substrates such as 4.5S RNA. The protein component plays an auxiliary but essential role in vivo by binding to the 5'-leader sequence and broadening the substrate specificity of the ribozyme. In Prochlorococcus marinus (strain NATL2A), this protein is Ribonuclease P protein component.